Reading from the N-terminus, the 334-residue chain is Serpentine receptor class alpha-11 (334 aa).

The Extracellular segment spans residues 1–23 (MTTNNPVCASDAHMEMYSSKLYT). The helical transmembrane segment at 24–44 (SALFLNLIIATTSMILTGFAI) threads the bilayer. The Cytoplasmic segment spans residues 45–57 (QKLFMESIINIST). Residues 58–80 (RMFLFCGLMCCSLHQTAYIVLRI) form a helical membrane-spanning segment. Residues 81–105 (QVIYQVFFKLSEPCNLYYPAIDCKY) are Extracellular-facing. The chain crosses the membrane as a helical span at residues 106-126 (VTFSLVAGNTGMIFIQSAMTI). Residues 127–145 (DRIFATIFPKLWPKLKYWP) lie on the Cytoplasmic side of the membrane. The chain crosses the membrane as a helical span at residues 146 to 166 (GVVLSILMIACNYANVQIIFW). Over 167-191 (GDPLTEYVPTCGQFPSKSVNRFQTF) the chain is Extracellular. Residues 192 to 212 (LAIALYMSIAHMVINVIILYI) traverse the membrane as a helical segment. Residues 213-239 (NVLQDRQQSKSFNVNQRYQSREALKSS) are Cytoplasmic-facing. The helical transmembrane segment at 240–260 (QAIFFLSMSQFFACLIYSVFT) threads the bilayer. The Extracellular portion of the chain corresponds to 261–277 (KVFLEFQLNLSPLQSGL). Residues 278-298 (VLALSYTTPYACIAIPSLIIF) form a helical membrane-spanning segment. Residues 299–334 (TFRFIKNQRLRNINELRSQTETGDECMRKIAKIWEK) lie on the Cytoplasmic side of the membrane.

This sequence belongs to the nematode receptor-like protein sra family. Expressed in interneurons AIY and AVB in L1 larvae. In adults, strong expression is seen in AIY and AIA but only weak expression in AVB.

The protein localises to the membrane. A G protein-coupled receptor required for olfactory imprinting a requisite in ordorant response such as benzaldehyde and isoamylalcohol. The protein is Serpentine receptor class alpha-11 (sra-11) of Caenorhabditis elegans.